A 427-amino-acid chain; its full sequence is Gamma-glutamyl phosphate reductase (427 aa).

It belongs to the gamma-glutamyl phosphate reductase family.

The protein localises to the cytoplasm. The catalysed reaction is L-glutamate 5-semialdehyde + phosphate + NADP(+) = L-glutamyl 5-phosphate + NADPH + H(+). Its pathway is amino-acid biosynthesis; L-proline biosynthesis; L-glutamate 5-semialdehyde from L-glutamate: step 2/2. Catalyzes the NADPH-dependent reduction of L-glutamate 5-phosphate into L-glutamate 5-semialdehyde and phosphate. The product spontaneously undergoes cyclization to form 1-pyrroline-5-carboxylate. This is Gamma-glutamyl phosphate reductase from Rhodospirillum rubrum (strain ATCC 11170 / ATH 1.1.1 / DSM 467 / LMG 4362 / NCIMB 8255 / S1).